Consider the following 223-residue polypeptide: Phosphoribosylformylglycinamidine synthase subunit PurQ (223 aa).

The Glutamine amidotransferase type-1 domain maps to 3-223 (FAVLVFPGSN…MVKSWREQNV (221 aa)). Cys85 (nucleophile) is an active-site residue. Catalysis depends on residues His193 and Glu195.

Part of the FGAM synthase complex composed of 1 PurL, 1 PurQ and 2 PurS subunits.

The protein localises to the cytoplasm. It carries out the reaction N(2)-formyl-N(1)-(5-phospho-beta-D-ribosyl)glycinamide + L-glutamine + ATP + H2O = 2-formamido-N(1)-(5-O-phospho-beta-D-ribosyl)acetamidine + L-glutamate + ADP + phosphate + H(+). It catalyses the reaction L-glutamine + H2O = L-glutamate + NH4(+). The protein operates within purine metabolism; IMP biosynthesis via de novo pathway; 5-amino-1-(5-phospho-D-ribosyl)imidazole from N(2)-formyl-N(1)-(5-phospho-D-ribosyl)glycinamide: step 1/2. Its function is as follows. Part of the phosphoribosylformylglycinamidine synthase complex involved in the purines biosynthetic pathway. Catalyzes the ATP-dependent conversion of formylglycinamide ribonucleotide (FGAR) and glutamine to yield formylglycinamidine ribonucleotide (FGAM) and glutamate. The FGAM synthase complex is composed of three subunits. PurQ produces an ammonia molecule by converting glutamine to glutamate. PurL transfers the ammonia molecule to FGAR to form FGAM in an ATP-dependent manner. PurS interacts with PurQ and PurL and is thought to assist in the transfer of the ammonia molecule from PurQ to PurL. This chain is Phosphoribosylformylglycinamidine synthase subunit PurQ, found in Staphylococcus epidermidis (strain ATCC 35984 / DSM 28319 / BCRC 17069 / CCUG 31568 / BM 3577 / RP62A).